The sequence spans 543 residues: Zinc finger protein 34 (543 aa).

Residues 14–87 (VTFEDVAVFL…DMHGAEQPSV (74 aa)) form the KRAB domain. Residues 84–151 (QPSVDGSAHG…PGEQRGPRLV (68 aa)) form a disordered region. Positions 124–147 (EPGEVHERVREPEGRLDRPGEQRG) are enriched in basic and acidic residues. 12 C2H2-type zinc fingers span residues 179–201 (HKCD…KRVH), 234–256 (YYCG…QRLH), 262–284 (YKCE…RRMH), 290–312 (YRCD…QRIH), 318–340 (YKCS…QRIH), 346–368 (YKCS…RRTH), 374–396 (YECK…QRIH), 402–424 (YKCN…QRSH), 430–452 (YECN…QRIH), 458–480 (YKCS…QRSH), 486–508 (YKCA…RRIH), and 514–536 (YTCG…QRIH).

Belongs to the krueppel C2H2-type zinc-finger protein family.

It localises to the nucleus. Its function is as follows. May be involved in transcriptional regulation. The polypeptide is Zinc finger protein 34 (ZNF34) (Bos taurus (Bovine)).